We begin with the raw amino-acid sequence, 95 residues long: Large ribosomal subunit protein bL25 (95 aa).

It belongs to the bacterial ribosomal protein bL25 family. In terms of assembly, part of the 50S ribosomal subunit; part of the 5S rRNA/L5/L18/L25 subcomplex. Contacts the 5S rRNA. Binds to the 5S rRNA independently of L5 and L18.

Functionally, this is one of the proteins that binds to the 5S RNA in the ribosome where it forms part of the central protuberance. The polypeptide is Large ribosomal subunit protein bL25 (Shewanella loihica (strain ATCC BAA-1088 / PV-4)).